The primary structure comprises 44 residues: Photosystem I reaction center subunit IX (44 aa).

The chain crosses the membrane as a helical span at residues 7 to 27 (YLSVAPVLTTLWFGSLAGLLI).

It belongs to the PsaJ family.

The protein localises to the plastid. The protein resides in the chloroplast thylakoid membrane. Functionally, may help in the organization of the PsaE and PsaF subunits. In Liriodendron tulipifera (Tuliptree), this protein is Photosystem I reaction center subunit IX.